The chain runs to 1641 residues: Histone-lysine N-methyltransferase SETD1 (1641 aa).

A disordered region spans residues 1-23 (MQDVRNINLVNNSSNSHDSSLAN). Over residues 8–23 (NLVNNSSNSHDSSLAN) the composition is skewed to low complexity. Residues 101 to 179 (VEVTIVNLND…KILDVFCDPF (79 aa)) form the RRM domain. 6 disordered regions span residues 236–384 (YTTQ…IDQR), 537–596 (APPF…SDEE), 831–915 (RIRK…SSSS), 930–949 (KART…NLNQ), 1119–1155 (QEKR…RKTA), and 1205–1226 (NSKG…SSQA). Residues 244–284 (IPNRSRDRNWNRDKERERDRHFKERSRHSSERSYDRDRGMR) show a composition bias toward basic and acidic residues. Residues 291–300 (IRRRRTFYRR) are compositionally biased toward basic residues. Composition is skewed to basic and acidic residues over residues 308 to 341 (EDSR…ESFR) and 349 to 384 (KGRD…IDQR). Residues 556–568 (EVFSDVNSDSNNS) are compositionally biased toward low complexity. Basic and acidic residues-rich tracts occupy residues 569–579 (ENKKRSCEKNN) and 844–867 (NFLE…KEDS). Low complexity predominate over residues 904–915 (SASSFFSSSSSS). 2 stretches are compositionally biased toward basic and acidic residues: residues 930 to 939 (KARTSEEDSP) and 1119 to 1128 (QEKRIEKSLD). Residues 1091 to 1132 (SEEEKEYQERRKRNTEYMAQMEREFLEEQEKRIEKSLDKNLQ) are a coiled coil. 2 stretches are compositionally biased toward polar residues: residues 1129 to 1145 (KNLQ…NSPR) and 1205 to 1217 (NSKG…QSPV). Residues 1473–1478 (RSNQRR) carry the RxxxRR motif motif. Residues 1502–1619 (KQLKFAKSAI…INEEITYDYK (118 aa)) form the SET domain. An S-adenosyl-L-methionine-binding site is contributed by Y1618. Positions 1625–1641 (EKIPCLCGAQGCRGTLN) constitute a Post-SET domain.

The protein belongs to the class V-like SAM-binding methyltransferase superfamily. As to quaternary structure, component of the Set1C/COMPASS complex, composed at least of the catalytic subunit Set1, wds/WDR5, Wdr82, Rbbp5, ash2, Cfp1/CXXC1, hcf and Dpy-30L1.

It is found in the nucleus. The protein resides in the chromosome. The catalysed reaction is L-lysyl(4)-[histone H3] + 3 S-adenosyl-L-methionine = N(6),N(6),N(6)-trimethyl-L-lysyl(4)-[histone H3] + 3 S-adenosyl-L-homocysteine + 3 H(+). The enzyme catalyses N(6)-methyl-L-lysyl(4)-[histone H3] + S-adenosyl-L-methionine = N(6),N(6)-dimethyl-L-lysyl(4)-[histone H3] + S-adenosyl-L-homocysteine + H(+). It catalyses the reaction N(6),N(6)-dimethyl-L-lysyl(4)-[histone H3] + S-adenosyl-L-methionine = N(6),N(6),N(6)-trimethyl-L-lysyl(4)-[histone H3] + S-adenosyl-L-homocysteine + H(+). Its function is as follows. Catalytic component of the COMPASS (Set1C) complex that specifically mono-, di- and trimethylates histone H3 to form H3K4me1/2/3. Binds RNAs which might negatively affect its histone methyltransferase activity. COMPASS recognizes ubiquitinated H2B on one face of the nucleosome which stimulates the methylation of H3 on the opposing face. Set1-dependent trimethylation regulates chromatin changes at active promoters that ensure optimal RNA polymerase II release into productive elongation, thereby contributing to optimal transcription. The polypeptide is Histone-lysine N-methyltransferase SETD1 (Drosophila melanogaster (Fruit fly)).